Consider the following 192-residue polypeptide: MVCIRRATVDDLLAMQACNLMCLPENYQMKYYLYHILSWPQLLYVAEDYNGRIVGYVLAKMEEESNECHGHITSLAVLRTHRKLGLATKLMTAAQAAMEQVYEAEYVSLHVRRSNRAAFNLYTETLGYKINDVEAKYYADGEDAYDMRKNLKGKQNHHHAHGHHHHHGGGCCSGDAKVVETAQAVDGKAVSK.

The 151-residue stretch at 2–152 (VCIRRATVDD…DAYDMRKNLK (151 aa)) folds into the N-acetyltransferase domain.

This sequence belongs to the acetyltransferase family. ARD1 subfamily. As to quaternary structure, part of the NatA complex. Interacts with NAA15. Expressed in leaves, roots, shoots and flowers.

It catalyses the reaction N-terminal glycyl-[protein] + acetyl-CoA = N-terminal N(alpha)-acetylglycyl-[protein] + CoA + H(+). The enzyme catalyses N-terminal L-alanyl-[protein] + acetyl-CoA = N-terminal N(alpha)-acetyl-L-alanyl-[protein] + CoA + H(+). It carries out the reaction N-terminal L-seryl-[protein] + acetyl-CoA = N-terminal N(alpha)-acetyl-L-seryl-[protein] + CoA + H(+). The catalysed reaction is N-terminal L-valyl-[protein] + acetyl-CoA = N-terminal N(alpha)-acetyl-L-valyl-[protein] + CoA + H(+). It catalyses the reaction N-terminal L-cysteinyl-[protein] + acetyl-CoA = N-terminal N(alpha)-acetyl-L-cysteinyl-[protein] + CoA + H(+). The enzyme catalyses N-terminal L-threonyl-[protein] + acetyl-CoA = N-terminal N(alpha)-acetyl-L-threonyl-[protein] + CoA + H(+). Catalytic subunit of the NatA N-alpha-acetyltransferase complex. Required for male gametocyte development, embryogenesis, suspensor development and the formation of the quiescent center (QC) in the root meristem. Involved in plant immunity through the regulation of SNC1 and RPM1 stability. This is N-terminal acetyltransferase A complex catalytic subunit NAA10 from Arabidopsis thaliana (Mouse-ear cress).